We begin with the raw amino-acid sequence, 343 residues long: Twinfilin (343 aa).

ADF-H domains lie at 4 to 139 (QTGI…KHKI) and 177 to 312 (GINC…EELH). The interval 317–343 (NLRPQFSKPKGPPSRGAKRLTKPQAVE) is disordered.

The protein belongs to the actin-binding proteins ADF family. Twinfilin subfamily. As to quaternary structure, interacts with G-actin; ADP-actin form.

It localises to the cytoplasm. Its subcellular location is the cytoskeleton. The protein localises to the cell cortex. Functionally, actin-binding protein involved in motile and morphological processes. Inhibits actin polymerization, likely by sequestering G-actin. This chain is Twinfilin (twf), found in Aedes aegypti (Yellowfever mosquito).